Here is a 285-residue protein sequence, read N- to C-terminus: Acetyl-coenzyme A carboxylase carboxyl transferase subunit beta (285 aa).

One can recognise a CoA carboxyltransferase N-terminal domain in the interval 29 to 285 (IMTKCPKCKK…ILKIHQEVTK (257 aa)). 4 residues coordinate Zn(2+): Cys-33, Cys-36, Cys-52, and Cys-55. A C4-type zinc finger spans residues 33-55 (CPKCKKIMYTKELAENLNVCFNC).

This sequence belongs to the AccD/PCCB family. Acetyl-CoA carboxylase is a heterohexamer composed of biotin carboxyl carrier protein (AccB), biotin carboxylase (AccC) and two subunits each of ACCase subunit alpha (AccA) and ACCase subunit beta (AccD). It depends on Zn(2+) as a cofactor.

It localises to the cytoplasm. It catalyses the reaction N(6)-carboxybiotinyl-L-lysyl-[protein] + acetyl-CoA = N(6)-biotinyl-L-lysyl-[protein] + malonyl-CoA. The protein operates within lipid metabolism; malonyl-CoA biosynthesis; malonyl-CoA from acetyl-CoA: step 1/1. In terms of biological role, component of the acetyl coenzyme A carboxylase (ACC) complex. Biotin carboxylase (BC) catalyzes the carboxylation of biotin on its carrier protein (BCCP) and then the CO(2) group is transferred by the transcarboxylase to acetyl-CoA to form malonyl-CoA. The protein is Acetyl-coenzyme A carboxylase carboxyl transferase subunit beta of Staphylococcus aureus (strain MSSA476).